The primary structure comprises 205 residues: Cytochrome c biogenesis ATP-binding export protein CcmA 1 (205 aa).

An ABC transporter domain is found at 2-205 (LEARDLYCER…LALTGGEAGL (204 aa)). An ATP-binding site is contributed by 34–41 (GGNGAGKT).

Belongs to the ABC transporter superfamily. CcmA exporter (TC 3.A.1.107) family. In terms of assembly, the complex is composed of two ATP-binding proteins (CcmA) and two transmembrane proteins (CcmB).

It localises to the cell inner membrane. The enzyme catalyses heme b(in) + ATP + H2O = heme b(out) + ADP + phosphate + H(+). Part of the ABC transporter complex CcmAB involved in the biogenesis of c-type cytochromes; once thought to export heme, this seems not to be the case, but its exact role is uncertain. Responsible for energy coupling to the transport system. This Salmonella paratyphi A (strain ATCC 9150 / SARB42) protein is Cytochrome c biogenesis ATP-binding export protein CcmA 1.